The sequence spans 428 residues: Histidinol dehydrogenase (428 aa).

Positions 125, 187, and 210 each coordinate NAD(+). Substrate-binding residues include Ser234, Gln256, and His259. Positions 256 and 259 each coordinate Zn(2+). Residues Glu323 and His324 each act as proton acceptor in the active site. Residues His324, Asp357, Glu411, and His416 each contribute to the substrate site. Position 357 (Asp357) interacts with Zn(2+). His416 is a Zn(2+) binding site.

This sequence belongs to the histidinol dehydrogenase family. Requires Zn(2+) as cofactor.

It carries out the reaction L-histidinol + 2 NAD(+) + H2O = L-histidine + 2 NADH + 3 H(+). It functions in the pathway amino-acid biosynthesis; L-histidine biosynthesis; L-histidine from 5-phospho-alpha-D-ribose 1-diphosphate: step 9/9. In terms of biological role, catalyzes the sequential NAD-dependent oxidations of L-histidinol to L-histidinaldehyde and then to L-histidine. This Bacteroides thetaiotaomicron (strain ATCC 29148 / DSM 2079 / JCM 5827 / CCUG 10774 / NCTC 10582 / VPI-5482 / E50) protein is Histidinol dehydrogenase.